The chain runs to 469 residues: Adenosylhomocysteinase (469 aa).

3 residues coordinate substrate: Thr63, Asp139, and Glu164. Residue 165-167 (TTT) coordinates NAD(+). Substrate-binding residues include Lys194 and Asp198. NAD(+)-binding positions include Asn199, 228–233 (GYGDVG), Glu251, Asn300, 321–323 (IGH), and Asn375.

Belongs to the adenosylhomocysteinase family. Requires NAD(+) as cofactor.

It is found in the cytoplasm. It carries out the reaction S-adenosyl-L-homocysteine + H2O = L-homocysteine + adenosine. The protein operates within amino-acid biosynthesis; L-homocysteine biosynthesis; L-homocysteine from S-adenosyl-L-homocysteine: step 1/1. May play a key role in the regulation of the intracellular concentration of adenosylhomocysteine. The polypeptide is Adenosylhomocysteinase (Pseudomonas putida (strain GB-1)).